The sequence spans 1073 residues: Self-sufficient cytochrome P450 monooxygenase CYP505AG1 (1073 aa).

Heme is bound at residue Cys-409. One can recognise a Flavodoxin-like domain in the interval 501–644 (VTILYGSNSG…DLENWEDEHL (144 aa)). Residues 507–511 (SNSGT) and 588–620 (VFAC…HRVA) each bind FMN. The 230-residue stretch at 680 to 909 (HNAVECIVSE…RPCKKQFHLP (230 aa)) folds into the FAD-binding FR-type domain.

It in the N-terminal section; belongs to the cytochrome P450 family. Requires FAD as cofactor. FMN is required as a cofactor. The cofactor is heme.

It catalyses the reaction 2 oxidized [cytochrome P450] + NADPH = 2 reduced [cytochrome P450] + NADP(+) + H(+). The catalysed reaction is an organic molecule + reduced [NADPH--hemoprotein reductase] + O2 = an alcohol + oxidized [NADPH--hemoprotein reductase] + H2O + H(+). The enzyme catalyses dodecanoate + reduced [NADPH--hemoprotein reductase] + O2 = 10-hydroxydodecanoate + oxidized [NADPH--hemoprotein reductase] + H2O + H(+). It carries out the reaction tetradecanoate + reduced [NADPH--hemoprotein reductase] + O2 = 12-hydroxytetradecanoate + oxidized [NADPH--hemoprotein reductase] + H2O + H(+). In terms of biological role, self-sufficient cytochrome P450 monooxygenase that catalyzes the regioselective in-chain hydroxylation of alkanes, fatty alcohols, and fatty acids, giving sub-terminal hydroxylation by acting preferentially on the omega-2 position. Prefers fatty acids as substrates, since it hydroxylates the small amounts of dodecanoic acid formed in the presence of an excess of 1-dodecanol. The polypeptide is Self-sufficient cytochrome P450 monooxygenase CYP505AG1 (Oidiodendron maius (strain Zn)).